The sequence spans 224 residues: COMM domain-containing protein 5 (224 aa).

At S2 the chain carries N-acetylserine. The 65-residue stretch at 151 to 215 (HVADFRWRVD…LVLKEMADLE (65 aa)) folds into the COMM domain.

This sequence belongs to the COMM domain-containing protein 5 family. As to quaternary structure, component of the commander complex consisting of the CCC subcomplex and the retriever subcomplex. Component of the CCC (COMMD/CCDC22/CCDC93) subcomplex consisting of COMMD1, COMMD2, COMMD3, COMMD4, COMMD5, COMMD6, COMMD7, COMMD8, COMMD9, COMMD10, CCDC22 and CCDC93; within the complex forms a heterodimer with COMMD10. Interacts (via COMM domain) with COMMD1 (via COMM domain). Interacts with RELA, RELB, NFKB1/p105. Interacts with CCDC22, CCDC93, SCNN1B, CUL2, CUL3, CUL4A, CUL4B, CUL7. In terms of tissue distribution, highly expressed in heart, stomach, jejunum, kidney, liver, and adrenal gland. Expression was generally higher in adult organs than in fetal tissues, particularly in heart, kidney, and liver.

It localises to the cytoplasm. The protein resides in the nucleus. Its function is as follows. Scaffold protein in the commander complex that is essential for endosomal recycling of transmembrane cargos; the commander complex is composed of the CCC subcomplex and the retriever subcomplex. May modulate activity of cullin-RING E3 ubiquitin ligase (CRL) complexes. Negatively regulates cell proliferation. Negatively regulates cell cycle G2/M phase transition probably by transactivating p21/CDKN1A through the p53/TP53-independent signaling pathway. Involved in kidney proximal tubule morphogenesis. Down-regulates activation of NF-kappa-B. The chain is COMM domain-containing protein 5 (COMMD5) from Homo sapiens (Human).